The chain runs to 353 residues: Thiamine-phosphate synthase (353 aa).

Residues 1-128 (MKSMPVAPIA…AASAAAIRYG (128 aa)) are unknown. The interval 129 to 353 (LYDLEVTVLQ…TSLQLLEALR (225 aa)) is thiamine-phosphate synthase. Residues 185 to 189 (QYRNK) and Asn-217 each bind 4-amino-2-methyl-5-(diphosphooxymethyl)pyrimidine. Positions 218 and 237 each coordinate Mg(2+). Ser-256 contributes to the 4-amino-2-methyl-5-(diphosphooxymethyl)pyrimidine binding site. Residue 282 to 284 (TAT) participates in 2-[(2R,5Z)-2-carboxy-4-methylthiazol-5(2H)-ylidene]ethyl phosphate binding. Lys-285 is a 4-amino-2-methyl-5-(diphosphooxymethyl)pyrimidine binding site. Gly-312 contacts 2-[(2R,5Z)-2-carboxy-4-methylthiazol-5(2H)-ylidene]ethyl phosphate.

Belongs to the thiamine-phosphate synthase family. Requires Mg(2+) as cofactor.

The enzyme catalyses 2-[(2R,5Z)-2-carboxy-4-methylthiazol-5(2H)-ylidene]ethyl phosphate + 4-amino-2-methyl-5-(diphosphooxymethyl)pyrimidine + 2 H(+) = thiamine phosphate + CO2 + diphosphate. The catalysed reaction is 2-(2-carboxy-4-methylthiazol-5-yl)ethyl phosphate + 4-amino-2-methyl-5-(diphosphooxymethyl)pyrimidine + 2 H(+) = thiamine phosphate + CO2 + diphosphate. It catalyses the reaction 4-methyl-5-(2-phosphooxyethyl)-thiazole + 4-amino-2-methyl-5-(diphosphooxymethyl)pyrimidine + H(+) = thiamine phosphate + diphosphate. It participates in cofactor biosynthesis; thiamine diphosphate biosynthesis; thiamine phosphate from 4-amino-2-methyl-5-diphosphomethylpyrimidine and 4-methyl-5-(2-phosphoethyl)-thiazole: step 1/1. In terms of biological role, condenses 4-methyl-5-(beta-hydroxyethyl)thiazole monophosphate (THZ-P) and 2-methyl-4-amino-5-hydroxymethyl pyrimidine pyrophosphate (HMP-PP) to form thiamine monophosphate (TMP). This is Thiamine-phosphate synthase from Prochlorococcus marinus (strain MIT 9303).